Here is an 88-residue protein sequence, read N- to C-terminus: Large ribosomal subunit protein bL27 (88 aa).

Residues 1-21 form a disordered region; the sequence is MAHKKGASSSRNGRDSAAQRL.

The protein belongs to the bacterial ribosomal protein bL27 family.

The sequence is that of Large ribosomal subunit protein bL27 from Mycobacterium marinum (strain ATCC BAA-535 / M).